The primary structure comprises 274 residues: Formamidopyrimidine-DNA glycosylase (274 aa).

Pro-2 functions as the Schiff-base intermediate with DNA in the catalytic mechanism. Residue Glu-3 is the Proton donor of the active site. The active-site Proton donor; for beta-elimination activity is Lys-56. DNA is bound by residues His-89, Arg-107, and Lys-148. The FPG-type zinc finger occupies 233 to 267; that stretch reads LAYGRAREMCVNCETTLENLKLGQRASVFCPQCQP. Arg-257 functions as the Proton donor; for delta-elimination activity in the catalytic mechanism.

It belongs to the FPG family. In terms of assembly, monomer. Zn(2+) serves as cofactor.

The catalysed reaction is Hydrolysis of DNA containing ring-opened 7-methylguanine residues, releasing 2,6-diamino-4-hydroxy-5-(N-methyl)formamidopyrimidine.. It carries out the reaction 2'-deoxyribonucleotide-(2'-deoxyribose 5'-phosphate)-2'-deoxyribonucleotide-DNA = a 3'-end 2'-deoxyribonucleotide-(2,3-dehydro-2,3-deoxyribose 5'-phosphate)-DNA + a 5'-end 5'-phospho-2'-deoxyribonucleoside-DNA + H(+). Functionally, involved in base excision repair of DNA damaged by oxidation or by mutagenic agents. Acts as a DNA glycosylase that recognizes and removes damaged bases. Has a preference for oxidized purines, such as 7,8-dihydro-8-oxoguanine (8-oxoG). Has AP (apurinic/apyrimidinic) lyase activity and introduces nicks in the DNA strand. Cleaves the DNA backbone by beta-delta elimination to generate a single-strand break at the site of the removed base with both 3'- and 5'-phosphates. The chain is Formamidopyrimidine-DNA glycosylase from Acinetobacter baumannii (strain SDF).